Reading from the N-terminus, the 277-residue chain is Diaminopimelate epimerase (277 aa).

The substrate site is built by asparagine 15 and asparagine 74. The active-site Proton donor is the cysteine 83. Residues 84–85, asparagine 159, asparagine 194, and 212–213 each bind substrate; these read GN and ER. Catalysis depends on cysteine 221, which acts as the Proton acceptor. 222–223 provides a ligand contact to substrate; the sequence is GT.

It belongs to the diaminopimelate epimerase family. Homodimer.

It localises to the cytoplasm. It catalyses the reaction (2S,6S)-2,6-diaminopimelate = meso-2,6-diaminopimelate. It participates in amino-acid biosynthesis; L-lysine biosynthesis via DAP pathway; DL-2,6-diaminopimelate from LL-2,6-diaminopimelate: step 1/1. In terms of biological role, catalyzes the stereoinversion of LL-2,6-diaminopimelate (L,L-DAP) to meso-diaminopimelate (meso-DAP), a precursor of L-lysine and an essential component of the bacterial peptidoglycan. Involved in the succinylase branch of the diaminopimelate biosynthesis. The chain is Diaminopimelate epimerase from Corynebacterium glutamicum (strain ATCC 13032 / DSM 20300 / JCM 1318 / BCRC 11384 / CCUG 27702 / LMG 3730 / NBRC 12168 / NCIMB 10025 / NRRL B-2784 / 534).